The following is a 96-amino-acid chain: UPF0235 protein YpsIP31758_0827 (96 aa).

The protein belongs to the UPF0235 family.

The sequence is that of UPF0235 protein YpsIP31758_0827 from Yersinia pseudotuberculosis serotype O:1b (strain IP 31758).